Consider the following 201-residue polypeptide: Large ribosomal subunit protein bL25 (201 aa).

The segment at 179 to 201 (VSITAPRVEAEKTEEEEPESTEE) is disordered. The span at 190-201 (KTEEEEPESTEE) shows a compositional bias: acidic residues.

It belongs to the bacterial ribosomal protein bL25 family. CTC subfamily. In terms of assembly, part of the 50S ribosomal subunit; part of the 5S rRNA/L5/L18/L25 subcomplex. Contacts the 5S rRNA. Binds to the 5S rRNA independently of L5 and L18.

In terms of biological role, this is one of the proteins that binds to the 5S RNA in the ribosome where it forms part of the central protuberance. The polypeptide is Large ribosomal subunit protein bL25 (Prosthecochloris aestuarii (strain DSM 271 / SK 413)).